The following is a 144-amino-acid chain: 3-hydroxyacyl-[acyl-carrier-protein] dehydratase FabZ (144 aa).

His-51 is an active-site residue.

The protein belongs to the thioester dehydratase family. FabZ subfamily.

It is found in the cytoplasm. It carries out the reaction a (3R)-hydroxyacyl-[ACP] = a (2E)-enoyl-[ACP] + H2O. Involved in unsaturated fatty acids biosynthesis. Catalyzes the dehydration of short chain beta-hydroxyacyl-ACPs and long chain saturated and unsaturated beta-hydroxyacyl-ACPs. This chain is 3-hydroxyacyl-[acyl-carrier-protein] dehydratase FabZ, found in Lactococcus lactis subsp. cremoris (strain SK11).